Reading from the N-terminus, the 119-residue chain is UPF0145 protein Bcep18194_B0595 (119 aa).

The protein belongs to the UPF0145 family.

In Burkholderia lata (strain ATCC 17760 / DSM 23089 / LMG 22485 / NCIMB 9086 / R18194 / 383), this protein is UPF0145 protein Bcep18194_B0595.